A 140-amino-acid polypeptide reads, in one-letter code: Profilin-2 (140 aa).

The residue at position 2 (Ala2) is an N-acetylalanine.

The protein belongs to the profilin family. As to quaternary structure, occurs in many kinds of cells as a complex with monomeric actin in a 1:1 ratio. Interacts with PFN2. Interacts with ACTMAP (via N-terminus); the interaction may facilitate efficient cleavage of the acetylated N-terminus of immature actin by ACTMAP. As to expression, highly expressed in brain, skeletal muscle and kidney and less strongly in heart, placenta, lung and liver.

The protein localises to the cytoplasm. It localises to the cytoskeleton. In terms of biological role, binds to actin and affects the structure of the cytoskeleton. At high concentrations, profilin prevents the polymerization of actin, whereas it enhances it at low concentrations. By binding to PIP2, it inhibits the formation of IP3 and DG. The polypeptide is Profilin-2 (PFN2) (Homo sapiens (Human)).